The following is a 577-amino-acid chain: Aspartate--tRNA ligase (577 aa).

Glutamate 171 serves as a coordination point for L-aspartate. Residues 195–198 form an aspartate region; it reads QLFK. Residue arginine 217 coordinates L-aspartate. Residues 217 to 219 and glutamine 226 contribute to the ATP site; that span reads RDE. Histidine 437 is an L-aspartate binding site. Glutamate 472 is an ATP binding site. Arginine 479 is an L-aspartate binding site. Residue 524–527 participates in ATP binding; sequence GFDR.

It belongs to the class-II aminoacyl-tRNA synthetase family. Type 1 subfamily. Homodimer.

The protein localises to the cytoplasm. The enzyme catalyses tRNA(Asp) + L-aspartate + ATP = L-aspartyl-tRNA(Asp) + AMP + diphosphate. Functionally, catalyzes the attachment of L-aspartate to tRNA(Asp) in a two-step reaction: L-aspartate is first activated by ATP to form Asp-AMP and then transferred to the acceptor end of tRNA(Asp). The chain is Aspartate--tRNA ligase from Deinococcus geothermalis (strain DSM 11300 / CIP 105573 / AG-3a).